The sequence spans 120 residues: Large ribosomal subunit protein bL20 (120 aa).

The protein belongs to the bacterial ribosomal protein bL20 family.

In terms of biological role, binds directly to 23S ribosomal RNA and is necessary for the in vitro assembly process of the 50S ribosomal subunit. It is not involved in the protein synthesizing functions of that subunit. The protein is Large ribosomal subunit protein bL20 of Methylacidiphilum infernorum (isolate V4) (Methylokorus infernorum (strain V4)).